We begin with the raw amino-acid sequence, 188 residues long: UPF0301 protein Cag_1601 (188 aa).

It belongs to the UPF0301 (AlgH) family.

In Chlorobium chlorochromatii (strain CaD3), this protein is UPF0301 protein Cag_1601.